A 508-amino-acid polypeptide reads, in one-letter code: Probable cytosol aminopeptidase (508 aa).

2 residues coordinate Mn(2+): Lys-274 and Asp-279. Lys-286 is an active-site residue. Mn(2+) contacts are provided by Asp-297, Asp-356, and Glu-358. Arg-360 is a catalytic residue.

It belongs to the peptidase M17 family. The cofactor is Mn(2+).

It localises to the cytoplasm. It carries out the reaction Release of an N-terminal amino acid, Xaa-|-Yaa-, in which Xaa is preferably Leu, but may be other amino acids including Pro although not Arg or Lys, and Yaa may be Pro. Amino acid amides and methyl esters are also readily hydrolyzed, but rates on arylamides are exceedingly low.. It catalyses the reaction Release of an N-terminal amino acid, preferentially leucine, but not glutamic or aspartic acids.. Its function is as follows. Presumably involved in the processing and regular turnover of intracellular proteins. Catalyzes the removal of unsubstituted N-terminal amino acids from various peptides. The sequence is that of Probable cytosol aminopeptidase from Paraburkholderia phytofirmans (strain DSM 17436 / LMG 22146 / PsJN) (Burkholderia phytofirmans).